The chain runs to 438 residues: LIM domain-containing protein C4F6.12 (438 aa).

Disordered stretches follow at residues 1–37 and 49–78; these read MHSP…NNLV and TGGR…TIKQ. Residues 24-37 are compositionally biased toward polar residues; sequence SPVSTNGSPLNNLV. Ser67 and Ser96 each carry phosphoserine. LIM zinc-binding domains lie at 256–316, 318–375, and 376–435; these read KSCH…QFSP, CKHC…NKYA, and VKCK…SVKF.

The protein is LIM domain-containing protein C4F6.12 of Schizosaccharomyces pombe (strain 972 / ATCC 24843) (Fission yeast).